We begin with the raw amino-acid sequence, 66 residues long: Cold shock-like protein CspLB (66 aa).

In terms of domain architecture, CSD spans 4-63 (GTVKWFNSEKGFGFIEVEGGDDVFVHFSAIEGEGFKTLDEGQSVEFEIVEGQRGPQAEKV).

Homodimer.

Its subcellular location is the cytoplasm. This chain is Cold shock-like protein CspLB (cspLB), found in Listeria monocytogenes serovar 1/2a (strain ATCC BAA-679 / EGD-e).